The chain runs to 143 residues: Transcriptional regulator MraZ (143 aa).

2 SpoVT-AbrB domains span residues 5-47 and 76-119; these read TYEP…SAEE and ASDE…DAAA.

This sequence belongs to the MraZ family. In terms of assembly, forms oligomers.

The protein resides in the cytoplasm. The protein localises to the nucleoid. The protein is Transcriptional regulator MraZ of Kocuria rhizophila (strain ATCC 9341 / DSM 348 / NBRC 103217 / DC2201).